Reading from the N-terminus, the 323-residue chain is Fructokinase-1 (323 aa).

Belongs to the carbohydrate kinase PfkB family. Expressed in stems, at higher levels in roots, and hardly detectable in leaves.

It catalyses the reaction D-fructose + ATP = D-fructose 6-phosphate + ADP + H(+). The protein operates within glycan biosynthesis; starch biosynthesis. Its activity is regulated as follows. Inhibited at high fructose. May play an important role in maintaining the flux of carbon towards starch formation in endosperm. May also be involved in a sugar-sensing pathway. This is Fructokinase-1 (FRK1) from Zea mays (Maize).